Consider the following 91-residue polypeptide: Probable Fe(2+)-trafficking protein (91 aa).

Belongs to the Fe(2+)-trafficking protein family.

Could be a mediator in iron transactions between iron acquisition and iron-requiring processes, such as synthesis and/or repair of Fe-S clusters in biosynthetic enzymes. This chain is Probable Fe(2+)-trafficking protein, found in Paraburkholderia phymatum (strain DSM 17167 / CIP 108236 / LMG 21445 / STM815) (Burkholderia phymatum).